We begin with the raw amino-acid sequence, 323 residues long: Arginase-1 (323 aa).

The disordered stretch occupies residues 1 to 27; the sequence is MSSKPKSLEIIGAPFSKGQPRGGVEKG. Position 7 is a phosphoserine (Ser7). Lys17 bears the N6-succinyllysine mark. Phosphoserine is present on residues Ser62 and Ser72. Lys75 is modified (N6-succinyllysine). Positions 101, 124, 126, and 128 each coordinate Mn(2+). Substrate is bound by residues 126-130 and 137-139; these read HTDIN and SGN. Ser163 is subject to Phosphoserine. Residue Asp183 coordinates substrate. Ser217 is modified (phosphoserine). Residues Asp232 and Asp234 each coordinate Mn(2+). Residues Thr246 and Glu277 each coordinate substrate. Thr281 is subject to Phosphothreonine.

Belongs to the arginase family. Homotrimer. Interacts with CMTM6. Mn(2+) serves as cofactor. Expressed in macrophages. Expressed in precursor and mature group 2 innate lymphoid cells (ILC2s). Expressed in lung tumor-associated myeloid cells. Expressed in lung tumor-infiltrating dendritic cells.

Its subcellular location is the cytoplasm. The protein localises to the cytoplasmic granule. The catalysed reaction is L-arginine + H2O = urea + L-ornithine. The protein operates within nitrogen metabolism; urea cycle; L-ornithine and urea from L-arginine: step 1/1. In terms of biological role, key element of the urea cycle converting L-arginine to urea and L-ornithine, which is further metabolized into metabolites proline and polyamides that drive collagen synthesis and bioenergetic pathways critical for cell proliferation, respectively; the urea cycle takes place primarily in the liver and, to a lesser extent, in the kidneys. Its function is as follows. Functions in L-arginine homeostasis in nonhepatic tissues characterized by the competition between nitric oxide synthase (NOS) and arginase for the available intracellular substrate arginine. Arginine metabolism is a critical regulator of innate and adaptive immune responses. Involved in an antimicrobial effector pathway in polymorphonuclear granulocytes (PMN). Upon PMN cell death is liberated from the phagolysosome and depletes arginine in the microenvironment leading to suppressed T cell and natural killer (NK) cell proliferation and cytokine secretion. In group 2 innate lymphoid cells (ILC2s) promotes acute type 2 inflammation in the lung and is involved in optimal ILC2 proliferation but not survival. Plays a role in the immune response of alternatively activated or M2 macrophages in processes such as wound healing and tissue regeneration, immune defense against multicellular pathogens and parasites, and immune suppression and allergic inflammation; the regulatory outcome seems to be organ specific. In tumor-infiltrating dendritic cells (DCs) and myeloid-derived suppressor cells (MDSCs) plays a role in suppression of T cell-mediated antitumor immunity. This is Arginase-1 (Arg1) from Mus musculus (Mouse).